We begin with the raw amino-acid sequence, 372 residues long: Putative glutamate--cysteine ligase 2 (372 aa).

It belongs to the glutamate--cysteine ligase type 2 family. YbdK subfamily.

The enzyme catalyses L-cysteine + L-glutamate + ATP = gamma-L-glutamyl-L-cysteine + ADP + phosphate + H(+). ATP-dependent carboxylate-amine ligase which exhibits weak glutamate--cysteine ligase activity. This is Putative glutamate--cysteine ligase 2 from Rhodopirellula baltica (strain DSM 10527 / NCIMB 13988 / SH1).